Reading from the N-terminus, the 447-residue chain is T-box transcription factor TBX20 (447 aa).

The interval 62–81 (DAHGEFGGGSGSSPSSSSLC) is disordered. Residues 109-288 (LWDKFHELGT…SNPFAKGFRD (180 aa)) constitute a DNA-binding region (T-box). The disordered stretch occupies residues 316–340 (TYGGEEDVLGDESQTTPNRGSAFTT). Polar residues predominate over residues 327–340 (ESQTTPNRGSAFTT).

The protein resides in the nucleus. Acts as a transcriptional activator and repressor required for cardiac development and may have key roles in the maintenance of functional and structural phenotypes in adult heart. In Homo sapiens (Human), this protein is T-box transcription factor TBX20 (TBX20).